The sequence spans 478 residues: Flotillin-like protein 1 (478 aa).

Residue Cys-35 is the site of S-palmitoyl cysteine attachment. Positions 235–277 (ENQREAEVAEANSELAKKKAAWTMAAQVAELEAAKAVALREAE) form a coiled coil.

It belongs to the band 7/mec-2 family. Flotillin subfamily. Post-translationally, may be palmitoylated. In terms of tissue distribution, expressed in all plant organs. Primarily expressed in vascular tissues. No change in spatial expression in root upon inoculation. Expression limited to the nodule vascular tissue.

It localises to the cell membrane. Its subcellular location is the membrane. The protein localises to the caveola. Functionally, may act as a scaffolding protein within caveolar membranes, functionally participating in formation of caveolae or caveolae-like vesicles. May be involved in nodule formation. In Medicago truncatula (Barrel medic), this protein is Flotillin-like protein 1 (FLOT1).